Here is a 126-residue protein sequence, read N- to C-terminus: MLSRLLKCKIHRAVVTHAELHYEGSCAIDGVLMDLAGIREYEEIHVWNVTNGKRFTTYAIRGEDNSGIISVNGGAAHQADVGDLVIIATFGDFTEAEANVHKPRLVYANPDNTVNHTANCIPVQVA.

S25 acts as the Schiff-base intermediate with substrate; via pyruvic acid in catalysis. S25 bears the Pyruvic acid (Ser) mark. T57 is a binding site for substrate. The active-site Proton donor is Y58. 73–75 provides a ligand contact to substrate; that stretch reads GGA.

It belongs to the PanD family. In terms of assembly, heterooctamer of four alpha and four beta subunits. Requires pyruvate as cofactor. Is synthesized initially as an inactive proenzyme, which is activated by self-cleavage at a specific serine bond to produce a beta-subunit with a hydroxyl group at its C-terminus and an alpha-subunit with a pyruvoyl group at its N-terminus.

The protein localises to the cytoplasm. The enzyme catalyses L-aspartate + H(+) = beta-alanine + CO2. Its pathway is cofactor biosynthesis; (R)-pantothenate biosynthesis; beta-alanine from L-aspartate: step 1/1. Functionally, catalyzes the pyruvoyl-dependent decarboxylation of aspartate to produce beta-alanine. This is Aspartate 1-decarboxylase from Acinetobacter baumannii (strain AB307-0294).